Here is a 1368-residue protein sequence, read N- to C-terminus: DNA-directed RNA polymerase subunit beta (1368 aa).

It belongs to the RNA polymerase beta chain family. The RNAP catalytic core consists of 2 alpha, 1 beta, 1 beta' and 1 omega subunit. When a sigma factor is associated with the core the holoenzyme is formed, which can initiate transcription.

It catalyses the reaction RNA(n) + a ribonucleoside 5'-triphosphate = RNA(n+1) + diphosphate. Functionally, DNA-dependent RNA polymerase catalyzes the transcription of DNA into RNA using the four ribonucleoside triphosphates as substrates. The chain is DNA-directed RNA polymerase subunit beta from Legionella pneumophila subsp. pneumophila (strain Philadelphia 1 / ATCC 33152 / DSM 7513).